Here is a 469-residue protein sequence, read N- to C-terminus: DNA polymerase delta subunit 2 (469 aa).

At Met1 the chain carries N-acetylmethionine. Phosphoserine is present on Ser257.

It belongs to the DNA polymerase delta/II small subunit family. As to quaternary structure, component of both the DNA polymerase delta and DNA polymerase zeta complexes. Component of the tetrameric DNA polymerase delta complex (Pol-delta4), which consists of POLD1/p125, POLD2/p50, POLD3/p66/p68 and POLD4/p12, with POLD1 bearing DNA polymerase and 3' to 5' proofreading exonuclease activities. Within Pol-delta4, directly interacts with POLD1, POLD3 and POLD4. Following stress caused by DNA damaging agents or by replication stress, POLD4 is degraded and Pol-delta4 is converted into a trimeric form of the complex (Pol-delta3), which consists of POLD1, POLD2 and POLD3. Pol-delta3 is the major form occurring at S phase replication sites, as well as DNA damage sites. Also observed as a dimeric complex with POLD2 (Pol-delta2 complex). Pol-delta2 is relatively insensitive to the PCNA stimulation (2-5-fold) compared to Pol-delta4 that is stimulated by over 50-fold. Contrary to the other components of Pol-delta4, does not directly interact with PCNA. As POLD1 and POLD4, directly interacts with WRNIP1; this interaction stimulates DNA polymerase delta-mediated DNA synthesis, independently of the presence of PCNA. This stimulation may be due predominantly to an increase of initiation frequency and also to increased processivity. Directly interacts with POLDIP2 and POLDIP3. Directly interacts with KCTD13/PDIP1; in the presence of PCNA, this interaction may stimulate DNA polymerase activity. Component of the tetrameric Pol-zeta complex (Pol-zeta4), which consists of REV3L, MAD2L2, POLD2 and POLD3, with REV3L bearing DNA polymerase catalytic activity. Interacts with KCTD10.

It localises to the nucleus. In terms of biological role, accessory component of both the DNA polymerase delta complex and the DNA polymerase zeta complex. As a component of the trimeric and tetrameric DNA polymerase delta complexes (Pol-delta3 and Pol-delta4, respectively), plays a role in high fidelity genome replication, including in lagging strand synthesis, and repair. Pol-delta3 and Pol-delta4 are characterized by the absence or the presence of POLD4. They exhibit differences in catalytic activity. Most notably, Pol-delta3 shows higher proofreading activity than Pol-delta4. Although both Pol-delta3 and Pol-delta4 process Okazaki fragments in vitro, Pol-delta3 may also be better suited to fulfill this task, exhibiting near-absence of strand displacement activity compared to Pol-delta4 and stalling on encounter with the 5'-blocking oligonucleotides. Pol-delta3 idling process may avoid the formation of a gap, while maintaining a nick that can be readily ligated. Along with DNA polymerase kappa, DNA polymerase delta carries out approximately half of nucleotide excision repair (NER) synthesis following UV irradiation. Under conditions of DNA replication stress, required for the repair of broken replication forks through break-induced replication (BIR). Involved in the translesion synthesis (TLS) of templates carrying O6-methylguanine or abasic sites performed by Pol-delta4, independently of DNA polymerase zeta (REV3L) or eta (POLH). Facilitates abasic site bypass by DNA polymerase delta by promoting extension from the nucleotide inserted opposite the lesion. Also involved in TLS as a component of the DNA polymerase zeta complex. Along with POLD3, dramatically increases the efficiency and processivity of DNA synthesis of the DNA polymerase zeta complex compared to the minimal zeta complex, consisting of only REV3L and REV7. In Mus musculus (Mouse), this protein is DNA polymerase delta subunit 2 (Pold2).